The primary structure comprises 240 residues: Probable transcriptional regulatory protein HP_0162 (240 aa).

This sequence belongs to the TACO1 family.

The protein localises to the cytoplasm. This Helicobacter pylori (strain ATCC 700392 / 26695) (Campylobacter pylori) protein is Probable transcriptional regulatory protein HP_0162.